The primary structure comprises 396 residues: MAKVLAINAGSSSLKFQLFEMPAETVLTKGVVERIGFDDAIFTIVVNGEKHQEVTAIPDHAAAVKMLLDKLIRYGIIRSFDEIDGIGHRVVHGGEKFSDSVLITEDVIKQIEEVSELAPLHNPANLVGIRAFQEVLPDVPAVAVFDTAFHQTMPEQSFLYSLPYEYYTKFGIRKYGFHGTSHKYVTQRAAELLGRPIEQLRLISCHLGNGASIAAVEGGKSIDTSMGFTPLAGVAMGTRSGNIDPALIPYIMEKTGMTADEVIEVLNKKSGMLGLSGISSDLRDLEKAAAEGNERAELALEVFANRIHKYIGSYAARMCGVDAIIFTAGIGENSEVVRAKVLRGLEFMGVYWDPILNKVRGKEAFISYPHSPVKVLVIPTNEELMIARDVMRLANL.

Asparagine 8 contributes to the Mg(2+) binding site. An ATP-binding site is contributed by lysine 15. Substrate is bound at residue arginine 89. The Proton donor/acceptor role is filled by aspartate 146. ATP is bound by residues 206–210, 281–283, and 329–333; these read HLGNG, DLR, and GIGEN. Glutamate 382 lines the Mg(2+) pocket.

The protein belongs to the acetokinase family. As to quaternary structure, homodimer. Requires Mg(2+) as cofactor. Mn(2+) serves as cofactor.

Its subcellular location is the cytoplasm. It catalyses the reaction acetate + ATP = acetyl phosphate + ADP. The protein operates within metabolic intermediate biosynthesis; acetyl-CoA biosynthesis; acetyl-CoA from acetate: step 1/2. In terms of biological role, catalyzes the formation of acetyl phosphate from acetate and ATP. Can also catalyze the reverse reaction. The polypeptide is Acetate kinase (Geobacillus kaustophilus (strain HTA426)).